The sequence spans 257 residues: AT-hook motif nuclear-localized protein 16 (257 aa).

Residues 1 to 71 are disordered; it reads MAGGTALTPT…SKNKPKPPII (71 aa). Residues 53–65 constitute a DNA-binding region (a.T hook); that stretch reads KRPRGRPAGSKNK. Residues 77 to 214 form the PPC domain; sequence PNSLRANAVE…DEAASMQNQQ (138 aa).

Interacts with FVE/MSI4 and MSI5 which are components of HDAC corepressor complexes. In terms of tissue distribution, preferentially expressed in the inflorescence meristem and young floral buds, as well as in seedling-stage vegetative meristems. Widely expressed in flowers, roots and stems, with relatively low expression in leaves.

It is found in the nucleus. Functionally, transcription factor that specifically binds AT-rich DNA sequences related to the nuclear matrix attachment regions (MARs). Encodes a nuclear matrix protein that acts in the maintenance of genomic integrity by silencing TEs and repeat-containing genes through epigenetic machinery. Acts as a chromatin remodeling factor that modifies the architecture of FLC and FWA chromatin by modulating both H3 acetylation and methylation leading to the regulation of FLC and FWA expression. Negatively regulates floral repressors including MAF4 and MAF5. Plays a transcription activation role in anther development. Regulates the expression of arabinogalactan proteins (AGPs) involved in the formation of the nexine layer of the pollen wall. Binds AGP6, AGP11, AGP23 and AGP40 promoters. The sequence is that of AT-hook motif nuclear-localized protein 16 from Arabidopsis thaliana (Mouse-ear cress).